The following is a 362-amino-acid chain: Methylthioribose-1-phosphate isomerase (362 aa).

The active-site Proton donor is Asp252.

It belongs to the eIF-2B alpha/beta/delta subunits family. MtnA subfamily.

It localises to the cytoplasm. The protein resides in the nucleus. The enzyme catalyses 5-(methylsulfanyl)-alpha-D-ribose 1-phosphate = 5-(methylsulfanyl)-D-ribulose 1-phosphate. Its pathway is amino-acid biosynthesis; L-methionine biosynthesis via salvage pathway; L-methionine from S-methyl-5-thio-alpha-D-ribose 1-phosphate: step 1/6. Functionally, catalyzes the interconversion of methylthioribose-1-phosphate (MTR-1-P) into methylthioribulose-1-phosphate (MTRu-1-P). The sequence is that of Methylthioribose-1-phosphate isomerase from Drosophila persimilis (Fruit fly).